The sequence spans 379 residues: MNQAFLPFSRPSIGEEEIAAVEQVLRSGWITTGPKNQELEQQFAERVGARHAVALSSATGAMHITLLALGIGPGDEVITPSQTWVSTANMICLLGATPVFVDVDPDTLMSDAATIEAAITPRTKAIIPVHYAGAAFDLDPLYALADKHGIAVIEDAAHAAGTTYRGRAIGARGTAIFSFHAIKNMTCAEGAMFVSDDEALANRVRMLKFHGLGVDAYDRLTHGRKPQAQVIEPGFKYNLADMNAAIALVQLQRLDEINAKREVLAKAYLQRLEGLPVQPLLLPQYPQQHAWHLFILRIDAERCGLDREAFMKGLQEQNIGTGIHFIATHLHTYYRQRFPEVQLPHTEWNSARLCSIPLFPDMTLDDVERVTGAIANLLD.

Lysine 183 carries the N6-(pyridoxal phosphate)lysine modification.

The protein belongs to the DegT/DnrJ/EryC1 family. ArnB subfamily. As to quaternary structure, homodimer. Pyridoxal 5'-phosphate serves as cofactor.

The enzyme catalyses UDP-4-amino-4-deoxy-beta-L-arabinose + 2-oxoglutarate = UDP-beta-L-threo-pentopyranos-4-ulose + L-glutamate. Its pathway is nucleotide-sugar biosynthesis; UDP-4-deoxy-4-formamido-beta-L-arabinose biosynthesis; UDP-4-deoxy-4-formamido-beta-L-arabinose from UDP-alpha-D-glucuronate: step 2/3. It functions in the pathway bacterial outer membrane biogenesis; lipopolysaccharide biosynthesis. Catalyzes the conversion of UDP-4-keto-arabinose (UDP-Ara4O) to UDP-4-amino-4-deoxy-L-arabinose (UDP-L-Ara4N). The modified arabinose is attached to lipid A and is required for resistance to polymyxin and cationic antimicrobial peptides. This Pseudomonas fluorescens (strain ATCC BAA-477 / NRRL B-23932 / Pf-5) protein is UDP-4-amino-4-deoxy-L-arabinose--oxoglutarate aminotransferase.